A 428-amino-acid chain; its full sequence is Histone deacetylase 3 (428 aa).

The segment at lysine 3–aspartate 316 is histone deacetylase. 3 residues coordinate 1D-myo-inositol 1,4,5,6-tetrakisphosphate: histidine 17, glycine 21, and lysine 25. Histidine 135 is a catalytic residue. The Zn(2+) site is built by aspartate 170, histidine 172, and aspartate 259. Position 265 (arginine 265) interacts with 1D-myo-inositol 1,4,5,6-tetrakisphosphate. The segment at leucine 385–isoleucine 428 is disordered. Composition is skewed to basic and acidic residues over residues serine 386–serine 405 and aspartate 415–isoleucine 428.

Belongs to the histone deacetylase family. HD type 1 subfamily.

It localises to the nucleus. It is found in the chromosome. The protein resides in the cytoplasm. The protein localises to the cytosol. It carries out the reaction N(6)-acetyl-L-lysyl-[histone] + H2O = L-lysyl-[histone] + acetate. The catalysed reaction is N(6)-acetyl-L-lysyl-[protein] + H2O = L-lysyl-[protein] + acetate. The enzyme catalyses N(6)-(2E)-butenoyl-L-lysyl-[protein] + H2O = (2E)-2-butenoate + L-lysyl-[protein]. It catalyses the reaction N(6)-(2-hydroxyisobutanoyl)-L-lysyl-[protein] + H2O = 2-hydroxy-2-methylpropanoate + L-lysyl-[protein]. It carries out the reaction N(6)-[(S)-lactoyl]-L-lysyl-[protein] + H2O = (S)-lactate + L-lysyl-[protein]. Its activity is regulated as follows. Inositol tetraphosphate (1D-myo-inositol 1,4,5,6-tetrakisphosphate) promotes the histone deacetylase activity by acting as an intermolecular glue between HDAC3 and N-Cor repressor complex components. Functionally, histone deacetylase that catalyzes the deacetylation of lysine residues on the N-terminal part of the core histones (H2A, H2B, H3 and H4), and some other non-histone substrates. Histone deacetylation gives a tag for epigenetic repression and plays an important role in transcriptional regulation, cell cycle progression and developmental events. Histone deacetylases act via the formation of large multiprotein complexes, such as N-Cor repressor complex, which activate the histone deacetylase activity. Participates in the BCL6 transcriptional repressor activity by deacetylating the H3 'Lys-27' (H3K27) on enhancer elements, antagonizing EP300 acetyltransferase activity and repressing proximal gene expression. Also functions as a deacetylase for non-histone targets. In addition to protein deacetylase activity, also acts as a protein-lysine deacylase by recognizing other acyl groups: catalyzes removal of (2E)-butenoyl (crotonyl), lactoyl (lactyl) and 2-hydroxyisobutanoyl (2-hydroxyisobutyryl) acyl groups from lysine residues, leading to protein decrotonylation, delactylation and de-2-hydroxyisobutyrylation, respectively. The polypeptide is Histone deacetylase 3 (HDAC3) (Gallus gallus (Chicken)).